The following is a 405-amino-acid chain: Envelope glycoprotein M (405 aa).

At 1–17 (MKSSKNDTFVYRTWVKT) the chain is on the intravirion side. A helical membrane pass occupies residues 18–38 (LVVYFVMFVMSAVVPITAMFP). The Virion surface portion of the chain corresponds to 39–76 (NLGYPCYFNALVDYGALNLTNYNLAHHLTPTLYLEPPE). The chain crosses the membrane as a helical span at residues 77–97 (MFVYITLVFIADCVAFIYYAC). The Intravirion portion of the chain corresponds to 98 to 121 (GEVALIKARKKVSGLTDLSAWVSA). A helical transmembrane segment spans residues 122 to 142 (VGSPTVLFLAILKLWSIQVFI). Over 143 to 149 (QVLSYKH) the chain is Virion surface. The helical transmembrane segment at 150–170 (VFLSAFVYFLHFLASVLHACA) threads the bilayer. Topologically, residues 171–192 (CVTRFSPVWVVKAQDNSIPQDT) are intravirion. Residues 193–215 (FLWWVVFYLKPVVTNLYLGCLAL) form a helical membrane-spanning segment. At 216 to 245 (ETLVFSLSVFLALGNSFYFMVGDMVLGAVN) the chain is on the virion surface side. Residues 246–266 (LFLILPIFWYILTEVWLASFM) traverse the membrane as a helical segment. Residue Arg-267 is a topological domain, intravirion. Residues 268-288 (HNFGFYCGMFIASIILILPLV) form a helical membrane-spanning segment. Over 289-299 (RYEAVFVSAKL) the chain is Virion surface. A helical membrane pass occupies residues 300 to 320 (HTTVAINVAIIPILCSVAMLI). At 321–405 (RICRIFKSMR…TTDSEEEIFP (85 aa)) the chain is on the intravirion side. The segment at 346-405 (LESEPRPRPSRTPSPGRNRRRSSTSSSSSRSTRRQRPVSTQALVSSVLPMTTDSEEEIFP) is disordered. Residues 386 to 397 (QALVSSVLPMTT) are compositionally biased toward polar residues.

It belongs to the herpesviridae glycoprotein M family. As to quaternary structure, interacts (via N-terminus) with gN (via N-terminus). The gM-gN heterodimer forms the gCII complex.

The protein localises to the virion membrane. It localises to the host Golgi apparatus. Its subcellular location is the host trans-Golgi network. It is found in the host endosome membrane. The protein resides in the host nucleus inner membrane. Envelope glycoprotein important for virion assembly and egress. Plays a role in the correct incorporation of gH-gL into virion membrane. Directs the glycoprotein N (gN) to the host trans-Golgi network. This chain is Envelope glycoprotein M, found in Epstein-Barr virus (strain GD1) (HHV-4).